We begin with the raw amino-acid sequence, 701 residues long: Arachidonate 12-lipoxygenase, 12R-type (701 aa).

The PLAT domain maps to 2–119 (ATYKVKVATG…TLSLREATGK (118 aa)). Residues 120–701 (TTADDTLPIL…PVLIENSISI (582 aa)) form the Lipoxygenase domain. Positions 398, 403, 578, 582, and 701 each coordinate Fe cation.

It belongs to the lipoxygenase family. It depends on Fe cation as a cofactor.

It localises to the cytoplasm. The protein localises to the perinuclear region. It catalyses the reaction (5Z,8Z,11Z,14Z)-eicosatetraenoate + O2 = (12R)-hydroperoxy-(5Z,8Z,10E,14Z)-eicosatetraenoate. The catalysed reaction is N-[omega-(9Z,12Z)-octadecadienoyloxy]acyl-beta-D-glucosyl-(1&lt;-&gt;1)-octadecasphing-4E-enine + O2 = N-[omega-(9R)-hydroperoxy-(10E,12Z)-octadecadienoyloxy]acyl-beta-D-glucosyl-(1&lt;-&gt;1)-octadecasphing-4E-enine. It carries out the reaction a N-[omega-(9Z,12Z)-octadecadienoyloxy]-acylsphin-4E-enine + O2 = a N-[omega-(9R)-hydroperoxy-(10E,12Z)-octadecadienoyloxy]-acylsphin-4E-enine. The enzyme catalyses (6Z,9Z,12Z)-octadecatrienoate + O2 = 10-hydroperoxy-(6Z,8E,12Z)-octadecatrienoate. It catalyses the reaction (4Z,7Z,10Z,13Z,16Z,19Z)-docosahexaenoate + O2 = 14-hydroperoxy-(4Z,7Z,10Z,12E,16Z,19Z)-docosahexaenoate. The catalysed reaction is (8Z,11Z,14Z)-eicosatrienoate + O2 = (8Z,10E,14Z)-12-hydroperoxyeicosatrienoate. It carries out the reaction (5Z,8Z,11Z,14Z,17Z)-eicosapentaenoate + O2 = (5Z,7Z,8Z,10E,14Z,17Z)-12-hydroperoxyeicosapentaenoate. The enzyme catalyses (6Z,9Z,12Z)-octadecatrienoate + O2 = 10R-hydroperoxy-(6Z,8E,12Z)-octadecatrienoate. It catalyses the reaction 1-O-methyl-(5Z,8Z,11Z,14Z)-eicosatetraenoate + O2 = 1-O-methyl (5Z,8Z,10E,12R,14Z)-hydroperoxyiecosatetraenoate. The catalysed reaction is 1-O-methyl-(5Z,8Z,11Z,14Z)-eicosatetraenoate + O2 = 1-O-methyl-8-hydroperoxy-(5Z,9E,11Z,14Z)-eicosatetraenoate. It carries out the reaction 1-O-methyl-(5Z,8Z,11Z,14Z)-eicosatetraenoate + O2 = 1-O-methyl-(8R)-hydroperoxy-(5Z,9E,11Z,14Z)-eicosatrienoate. The enzyme catalyses 1-O-methyl-(9Z,12Z)-octadecadienoate + O2 = 1-O-methyl-(9R)-hydroperoxy-(10E,12Z)-octadecadienoate. It catalyses the reaction 1-O-methyl-20-hydroxy-(5Z,8Z,11Z,14Z)-eicosatetraenoate + O2 = 1-O-methyl-8-hydroperoxy-20-hydroxy-(5Z,9E,11Z,14Z)-eicosatetraenoate. The catalysed reaction is 1-O-methyl-20-hydroxy-(5Z,8Z,11Z,14Z)-eicosatetraenoate + O2 = 1-O-methyl-12-hydroperoxy-20-hydroxy-(5Z,8Z,10E,14Z)-eicosatetraenoate. It carries out the reaction 1-O-methyl-20-hydroxy-(5Z,8Z,11Z,14Z)-eicosatetraenoate + O2 = 1-O-methyl-9-hydroperoxy-20-hydroxy-(5Z,7E,11Z,14Z)-eicosatetraenoate. The enzyme catalyses 1-O-methyl-(9Z,12Z)-octadecadienoate + O2 = 1-O-methyl-(13S)-hydroperoxy-(9Z,11E)-octadecadienoate. It participates in lipid metabolism; hydroperoxy eicosatetraenoic acid biosynthesis. Its pathway is lipid metabolism; sphingolipid metabolism. With respect to regulation, increased by calcium. Catalyzes the regio and stereo-specific incorporation of a single molecule of dioxygen into free and esterified polyunsaturated fatty acids generating lipid hydroperoxides that can be further reduced to the corresponding hydroxy species. In the skin, acts upstream of ALOXE3 on the lineolate moiety of esterified omega-hydroxyacyl-sphingosine (EOS) ceramides to produce an epoxy-ketone derivative, a crucial step in the conjugation of omega-hydroxyceramide to membrane proteins. Therefore plays a crucial role in the synthesis of corneocytes lipid envelope and the establishment of the skin barrier to water loss. May also play a role in the regulation of the expression of airway mucins. The chain is Arachidonate 12-lipoxygenase, 12R-type from Rattus norvegicus (Rat).